A 116-amino-acid polypeptide reads, in one-letter code: Anti-sigma F factor antagonist (116 aa).

Residues 3-113 form the STAS domain; it reads LSIELEFKQD…PNEANALQKL (111 aa). Ser58 is subject to Phosphoserine.

This sequence belongs to the anti-sigma-factor antagonist family. Phosphorylated by SpoIIAB on a serine residue.

In the phosphorylated form it could act as an anti-anti-sigma factor that counteracts SpoIIAB and thus releases sigma f from inhibition. This Priestia megaterium (Bacillus megaterium) protein is Anti-sigma F factor antagonist (spoIIAA).